A 167-amino-acid chain; its full sequence is UPF0225 protein VV1358 (167 aa).

This sequence belongs to the UPF0225 family.

In Vibrio vulnificus (strain YJ016), this protein is UPF0225 protein VV1358.